A 265-amino-acid polypeptide reads, in one-letter code: Small ribosomal subunit protein uS2 (265 aa).

The disordered stretch occupies residues A226–E265. Over residues D245–E265 the composition is skewed to basic and acidic residues.

Belongs to the universal ribosomal protein uS2 family.

In Xanthomonas axonopodis pv. citri (strain 306), this protein is Small ribosomal subunit protein uS2.